The chain runs to 95 residues: uncharacterized protein (95 aa).

Composition is skewed to basic and acidic residues over residues 1-28 and 41-53; these read MRRAEVKRSAHGPADEKAQTGSPRKERC and DERVPSDPEKGRP. A disordered region spans residues 1 to 73; it reads MRRAEVKRSA…RTSRAGSSWQ (73 aa).

This is an uncharacterized protein from Homo sapiens (Human).